The sequence spans 332 residues: Glycerol-3-phosphate dehydrogenase [NAD(P)+] (332 aa).

4 residues coordinate NADPH: Ser-11, Phe-12, Lys-32, and Lys-106. Sn-glycerol 3-phosphate is bound by residues Lys-106, Gly-137, and Ser-139. Ala-141 contributes to the NADPH binding site. Lys-192, Asp-245, Ser-255, Arg-256, and Asn-257 together coordinate sn-glycerol 3-phosphate. Residue Lys-192 is the Proton acceptor of the active site. Position 256 (Arg-256) interacts with NADPH. Val-280 and Glu-282 together coordinate NADPH.

It belongs to the NAD-dependent glycerol-3-phosphate dehydrogenase family.

Its subcellular location is the cytoplasm. The catalysed reaction is sn-glycerol 3-phosphate + NAD(+) = dihydroxyacetone phosphate + NADH + H(+). The enzyme catalyses sn-glycerol 3-phosphate + NADP(+) = dihydroxyacetone phosphate + NADPH + H(+). It participates in membrane lipid metabolism; glycerophospholipid metabolism. Its function is as follows. Catalyzes the reduction of the glycolytic intermediate dihydroxyacetone phosphate (DHAP) to sn-glycerol 3-phosphate (G3P), the key precursor for phospholipid synthesis. This Staphylococcus aureus (strain bovine RF122 / ET3-1) protein is Glycerol-3-phosphate dehydrogenase [NAD(P)+].